We begin with the raw amino-acid sequence, 262 residues long: tRNA 4-demethylwyosine(37)-methyltransferase Taw21 (262 aa).

S-adenosyl-L-methionine-binding positions include His108, Phe125, 148-149 (DL), and 175-176 (DA).

The protein belongs to the class I-like SAM-binding methyltransferase superfamily. TRM5/TYW2 family.

It is found in the cytoplasm. The enzyme catalyses 4-demethylwyosine(37) in tRNA(Phe) + S-adenosyl-L-methionine = isowyosine(37) in tRNA(Phe) + S-adenosyl-L-homocysteine + H(+). In terms of biological role, catalyzes the C7-methylation of 4-demethylwyosine (imG-14) at position 37 in tRNA(Phe). The sequence is that of tRNA 4-demethylwyosine(37)-methyltransferase Taw21 from Saccharolobus solfataricus (strain ATCC 35092 / DSM 1617 / JCM 11322 / P2) (Sulfolobus solfataricus).